Here is a 370-residue protein sequence, read N- to C-terminus: Protein Brevis radix-like 3 (370 aa).

Positions 140–221 (KEWVAQVEPG…NFEKVMELYN (82 aa)) constitute a BRX 1 domain. Composition is skewed to polar residues over residues 231 to 248 (LQTP…QSVK) and 266 to 291 (PGSS…SSID). The interval 231 to 316 (LQTPPVSEDG…VSNASDMESE (86 aa)) is disordered. The region spanning 315 to 370 (SEWVEQDEPGIYITIRALPDGNRELRRVRFSRDKFGETHARLWWEQNRARIQQQYL) is the BRX 2 domain.

The protein belongs to the BRX family. As to expression, expressed in roots.

It localises to the nucleus. This is Protein Brevis radix-like 3 (BRXL3) from Arabidopsis thaliana (Mouse-ear cress).